The sequence spans 394 residues: Teichoic acid poly(glycerol phosphate) polymerase (394 aa).

It belongs to the CDP-glycerol glycerophosphotransferase family.

It is found in the cell membrane. It catalyses the reaction 4-O-[(2R)-glycerylphospho]-N-acetyl-beta-D-mannosaminyl-(1-&gt;4)-N-acetyl-alpha-D-glucosaminyl di-trans,octa-cis-undecaprenyl diphosphate + n CDP-glycerol = 4-O-{[(2R)-1-glycerylphospho](n)-(2R)-1-glycerylphospho}-N-acetyl-beta-D-mannosaminyl-(1-&gt;4)-N-acetyl-alpha-D-glucosaminyl undecaprenyl diphosphate + n CMP + n H(+). Its function is as follows. Catalyzes the addition of further 2-8 glycerol phosphate units from CDP-glycerol to the single glycerol phosphate unit bound to the prenolpyrophosphate-linked disaccharide. The function in the cell is unknown since the product is not part of the poly(ribitol phosphate) teichoic acid found in the cell walls. In Bacillus spizizenii (strain ATCC 23059 / NRRL B-14472 / W23) (Bacillus subtilis subsp. spizizenii), this protein is Teichoic acid poly(glycerol phosphate) polymerase (tarF).